Reading from the N-terminus, the 96-residue chain is Small ribosomal subunit protein bS6 (96 aa).

It belongs to the bacterial ribosomal protein bS6 family.

Its function is as follows. Binds together with bS18 to 16S ribosomal RNA. The polypeptide is Small ribosomal subunit protein bS6 (Streptococcus pneumoniae serotype 2 (strain D39 / NCTC 7466)).